Reading from the N-terminus, the 403-residue chain is S-adenosylmethionine synthase (403 aa).

His-16 lines the ATP pocket. Asp-18 is a binding site for Mg(2+). Glu-44 is a binding site for K(+). 2 residues coordinate L-methionine: Glu-57 and Gln-100. The tract at residues 100-110 (QSNDIAQGVDH) is flexible loop. Residues 167–169 (DAK), 238–239 (RF), Asp-247, 253–254 (RK), Ala-270, and Lys-274 each bind ATP. Asp-247 lines the L-methionine pocket. Position 278 (Lys-278) interacts with L-methionine.

Belongs to the AdoMet synthase family. As to quaternary structure, homotetramer; dimer of dimers. The cofactor is Mg(2+). Requires K(+) as cofactor.

It is found in the cytoplasm. It carries out the reaction L-methionine + ATP + H2O = S-adenosyl-L-methionine + phosphate + diphosphate. The protein operates within amino-acid biosynthesis; S-adenosyl-L-methionine biosynthesis; S-adenosyl-L-methionine from L-methionine: step 1/1. In terms of biological role, catalyzes the formation of S-adenosylmethionine (AdoMet) from methionine and ATP. The overall synthetic reaction is composed of two sequential steps, AdoMet formation and the subsequent tripolyphosphate hydrolysis which occurs prior to release of AdoMet from the enzyme. The sequence is that of S-adenosylmethionine synthase from Verminephrobacter eiseniae (strain EF01-2).